The sequence spans 355 residues: Methylthioribose-1-phosphate isomerase (355 aa).

Residues R47–A49, R91, and Q199 each bind substrate. D240 acts as the Proton donor in catalysis. N250–K251 contacts substrate.

Belongs to the eIF-2B alpha/beta/delta subunits family. MtnA subfamily.

It carries out the reaction 5-(methylsulfanyl)-alpha-D-ribose 1-phosphate = 5-(methylsulfanyl)-D-ribulose 1-phosphate. The protein operates within amino-acid biosynthesis; L-methionine biosynthesis via salvage pathway; L-methionine from S-methyl-5-thio-alpha-D-ribose 1-phosphate: step 1/6. Functionally, catalyzes the interconversion of methylthioribose-1-phosphate (MTR-1-P) into methylthioribulose-1-phosphate (MTRu-1-P). The chain is Methylthioribose-1-phosphate isomerase from Oleidesulfovibrio alaskensis (strain ATCC BAA-1058 / DSM 17464 / G20) (Desulfovibrio alaskensis).